A 129-amino-acid polypeptide reads, in one-letter code: Glycine cleavage system H protein (129 aa).

One can recognise a Lipoyl-binding domain in the interval 24–106 (SYTVGITEHA…YGEGWFFRVM (83 aa)). Lys-65 carries the post-translational modification N6-lipoyllysine.

It belongs to the GcvH family. In terms of assembly, the glycine cleavage system is composed of four proteins: P, T, L and H. It depends on (R)-lipoate as a cofactor.

Functionally, the glycine cleavage system catalyzes the degradation of glycine. The H protein shuttles the methylamine group of glycine from the P protein to the T protein. The polypeptide is Glycine cleavage system H protein (Shewanella sp. (strain MR-7)).